Here is an 865-residue protein sequence, read N- to C-terminus: Alanine--tRNA ligase (865 aa).

Zn(2+) contacts are provided by His556, His560, Cys660, and His664.

It belongs to the class-II aminoacyl-tRNA synthetase family. Zn(2+) serves as cofactor.

Its subcellular location is the cytoplasm. The catalysed reaction is tRNA(Ala) + L-alanine + ATP = L-alanyl-tRNA(Ala) + AMP + diphosphate. Functionally, catalyzes the attachment of alanine to tRNA(Ala) in a two-step reaction: alanine is first activated by ATP to form Ala-AMP and then transferred to the acceptor end of tRNA(Ala). Also edits incorrectly charged Ser-tRNA(Ala) and Gly-tRNA(Ala) via its editing domain. This Ruthia magnifica subsp. Calyptogena magnifica protein is Alanine--tRNA ligase.